A 146-amino-acid chain; its full sequence is Arginine repressor (146 aa).

It belongs to the ArgR family.

It is found in the cytoplasm. It functions in the pathway amino-acid biosynthesis; L-arginine biosynthesis [regulation]. Its function is as follows. Regulates arginine biosynthesis genes. This is Arginine repressor from Parabacteroides distasonis (strain ATCC 8503 / DSM 20701 / CIP 104284 / JCM 5825 / NCTC 11152).